The primary structure comprises 355 residues: MTSSSSNRQFLHRTANTFLTYPQCPEHPEIISQRIWDLVGRWNPLYIICAQEAHEDGNMHLHALIQTDKQVRTTDSRFFDIDGFHPNIQSAMSPNKVRDYILKEPLALFERGTFVPRKKTFLGNSSKGNSEKKPSKDEIMQDIISHATSKPEYLSMVRKSFPYDWATKLQYFEYSANKLFPDIQEEFINPHPTSEPDLLCNESIKDWLQPNIYQQADNGSRKQSLYIVGPTRTGKSTWARSLGRHNYWQNNVDWSSYNEDAIYNIVDDIPFKYCPCWKQLVGCQKEFVVNPKYGKKKKVQMKSKPTIILANSDEDWMKEMTPGQLEYFEANCMIYIMSPGEKWYSPPQLPPTEEV.

The 104-residue stretch at 11 to 114 (LHRTANTFLT…PLALFERGTF (104 aa)) folds into the CRESS-DNA virus Rep endonuclease domain. The short motif at 18–21 (FLTY) is the RCR-1 element. Positions 52, 60, and 62 each coordinate a divalent metal cation. Positions 60–62 (HLH) match the RCR-2 motif. The active-site For DNA cleavage activity is Tyr100. The short motif at 100–103 (YILK) is the RCR-3 element. Glu104 is a binding site for a divalent metal cation. The tract at residues 175–187 (SANKLFPDIQEEF) is oligomerization. 229-236 (GPTRTGKS) provides a ligand contact to ATP. The interval 252 to 270 (VDWSSYNEDAIYNIVDDIP) is transactivation. Positions 292–303 (KYGKKKKVQMKS) match the Nuclear localization signal motif.

This sequence belongs to the geminiviridae Rep protein family. Homooligomer. Rep binds to repeated DNA motifs (iterons). Forms the O-complex, which is a Rep-DNA complex involved in the initiation of RCR. Part of the C- and V-complexes which are RepA-Rep-DNA complexes involved in the c-sense and v-sense transcription. Requires Mg(2+) as cofactor. Mn(2+) is required as a cofactor.

It is found in the host nucleus. Essential for the replication of viral ssDNA. The closed circular ssDNA genome is first converted to a superhelical dsDNA. Rep binds a specific region at the genome origin of replication. It introduces an endonucleolytic nick within the conserved sequence 5'-TAATATTAC-3' in the intergenic region of the genome present in all geminiviruses, thereby initiating the rolling circle replication (RCR). Following cleavage, binds covalently to the 5'-phosphate of DNA as a tyrosyl ester. The cleavage gives rise to a free 3'-OH that serves as a primer for the cellular DNA polymerase. The polymerase synthesizes the (+) strand DNA by rolling circle mechanism. After one round of replication, a Rep-catalyzed nucleotidyl transfer reaction releases a circular single-stranded virus genome, thereby terminating the replication. Displays origin-specific DNA cleavage, nucleotidyl transferase, ATPase and helicase activities. Acts as an inhibitor of C-sense gene transcription. In Maize streak virus genotype D (isolate Raw) (MSV), this protein is Replication-associated protein.